We begin with the raw amino-acid sequence, 522 residues long: Maturase K (522 aa).

It belongs to the intron maturase 2 family. MatK subfamily.

It is found in the plastid. The protein localises to the chloroplast. In terms of biological role, usually encoded in the trnK tRNA gene intron. Probably assists in splicing its own and other chloroplast group II introns. The polypeptide is Maturase K (Pillansia templemannii).